Consider the following 117-residue polypeptide: MKVLVIFAVLSLVIFSNCSAETDEDFFGEESFEADDIIPFIAKEQVRSDCTLRNHDCTDDRHSCCRSKMFKDVCTCFYPSQRSETARAKKELCTCQQPKHLKYIEKGLQKAKDYATG.

Positions 1–20 (MKVLVIFAVLSLVIFSNCSA) are cleaved as a signal peptide. Positions 21–47 (ETDEDFFGEESFEADDIIPFIAKEQVR) are excised as a propeptide. 4 disulfides stabilise this stretch: cysteine 50–cysteine 65, cysteine 57–cysteine 74, cysteine 64–cysteine 95, and cysteine 76–cysteine 93. The propeptide occupies 82–87 (RSETAR). A Threonine amide modification is found at threonine 116.

This sequence belongs to the neurotoxin 19 (CSTX) family. 12 subfamily. In terms of assembly, heterodimer of A and B chains; disulfide-linked. Interacts with CSTX-1 (AC P81694) (Kd=430 nM), and with CSTX-9 (AC P58604) (Kd=370 nM). Expressed by the venom gland.

It is found in the secreted. The protein resides in the target cell membrane. Its function is as follows. Synergistic toxin that induces or increases a cytolytic effect when combined with CSTX-1 (AC P81694) or CSTX-9 (AC P58604). When alone, has a weak insecticidal activity, with an unknown molecular target. This is Neurotoxic enhancer CSTX-13 from Cupiennius salei (American wandering spider).